Reading from the N-terminus, the 1009-residue chain is Chitin synthase 2 (1009 aa).

Composition is skewed to polar residues over residues 1–12 (MSYNNPNNSNSH) and 34–62 (EFLN…LNFQ). Disordered regions lie at residues 1–62 (MSYN…LNFQ) and 175–234 (DESQ…EVRS). The span at 192-202 (EGEEEEEEGET) shows a compositional bias: acidic residues. The next 7 membrane-spanning stretches (helical) occupy residues 647-667 (WLNG…KVWT), 682-702 (FFYQ…YFLV), 722-742 (ILSV…FVLS), 757-777 (IVIF…FMAV), 804-823 (LVVA…FLYF), 930-950 (VLVW…TGGF), and 967-987 (AAVF…FRFI).

This sequence belongs to the chitin synthase family.

It is found in the cell membrane. It catalyses the reaction [(1-&gt;4)-N-acetyl-beta-D-glucosaminyl](n) + UDP-N-acetyl-alpha-D-glucosamine = [(1-&gt;4)-N-acetyl-beta-D-glucosaminyl](n+1) + UDP + H(+). Polymerizes chitin, a structural polymer of the cell wall and septum, by transferring the sugar moiety of UDP-GlcNAc to the non-reducing end of the growing chitin polymer. This Candida albicans (Yeast) protein is Chitin synthase 2 (CHS2).